A 247-amino-acid chain; its full sequence is DNA polymerase sliding clamp (247 aa).

The protein belongs to the PCNA family. Homotrimer. The subunits circularize to form a toroid; DNA passes through its center. Replication factor C (RFC) is required to load the toroid on the DNA.

Functionally, sliding clamp subunit that acts as a moving platform for DNA processing. Responsible for tethering the catalytic subunit of DNA polymerase and other proteins to DNA during high-speed replication. The polypeptide is DNA polymerase sliding clamp (Methanocorpusculum labreanum (strain ATCC 43576 / DSM 4855 / Z)).